The following is a 602-amino-acid chain: Proteasome-associated ATPase (602 aa).

Residues 1–13 (MQHDLPGGRHDEA) are compositionally biased toward basic and acidic residues. The tract at residues 1 to 33 (MQHDLPGGRHDEADSSETGGAGTTENPSSEQAR) is disordered. A compositionally biased stretch (polar residues) spans 23 to 32 (TTENPSSEQA). A coiled-coil region spans residues 28–103 (SSEQARQIRF…LREEVDRLAQ (76 aa)). 291 to 296 (GCGKTL) contributes to the ATP binding site. The tract at residues 601-602 (YL) is docks into pockets in the proteasome alpha-ring.

It belongs to the AAA ATPase family. Homohexamer. Assembles into a hexameric ring structure that caps the 20S proteasome core. Strongly interacts with the prokaryotic ubiquitin-like protein Pup through a hydrophobic interface; the interacting region of ARC lies in its N-terminal coiled-coil domain. There is one Pup binding site per ARC hexamer ring. Upon ATP-binding, the C-terminus of ARC interacts with the alpha-rings of the proteasome core, possibly by binding to the intersubunit pockets.

It functions in the pathway protein degradation; proteasomal Pup-dependent pathway. Functionally, ATPase which is responsible for recognizing, binding, unfolding and translocation of pupylated proteins into the bacterial 20S proteasome core particle. May be essential for opening the gate of the 20S proteasome via an interaction with its C-terminus, thereby allowing substrate entry and access to the site of proteolysis. Thus, the C-termini of the proteasomal ATPase may function like a 'key in a lock' to induce gate opening and therefore regulate proteolysis. The protein is Proteasome-associated ATPase of Saccharomonospora viridis (strain ATCC 15386 / DSM 43017 / JCM 3036 / CCUG 5913 / NBRC 12207 / NCIMB 9602 / P101) (Thermoactinomyces viridis).